The sequence spans 1631 residues: Ras GTPase-activating-like protein IQGAP3 (1631 aa).

One can recognise a Calponin-homology (CH) domain in the interval 34-149 (LCRLEEAKRW…YCIHALSLFL (116 aa)). Y162 carries the phosphotyrosine modification. A Phosphoserine modification is found at S539. IQ domains follow at residues 730-759 (NVGF…FLRT), 760-789 (WLPA…YFKA), 790-819 (NLDA…YFQK), and 820-849 (NVNS…APHP). Positions 1004-1253 (YLLLQLFKTA…LKFRKFIHRA (250 aa)) constitute a Ras-GAP domain. S1424 carries the post-translational modification Phosphoserine.

In Homo sapiens (Human), this protein is Ras GTPase-activating-like protein IQGAP3 (IQGAP3).